The primary structure comprises 368 residues: Cystathionine beta-lyase (368 aa).

N6-(pyridoxal phosphate)lysine is present on Lys-221.

It belongs to the class-II pyridoxal-phosphate-dependent aminotransferase family. MalY/PatB cystathionine beta-lyase subfamily. The cofactor is pyridoxal 5'-phosphate.

The enzyme catalyses L,L-cystathionine + H2O = L-homocysteine + pyruvate + NH4(+). It catalyses the reaction an S-substituted L-cysteine + H2O = a thiol + pyruvate + NH4(+). It participates in amino-acid biosynthesis; L-methionine biosynthesis via de novo pathway; L-homocysteine from L-cystathionine: step 1/1. Its function is as follows. Catalyzes the transformation of cystathionine to homocysteine. The polypeptide is Cystathionine beta-lyase (metC) (Corynebacterium glutamicum (Brevibacterium saccharolyticum)).